A 573-amino-acid chain; its full sequence is Ribosomal RNA-processing protein 9 (573 aa).

Positions 1 to 63 (MSDVTQQKKR…FEGENPADKR (63 aa)) are disordered. Residue Ser-2 is modified to N-acetylserine. The segment covering 25 to 58 (DEEITDPSSNEDEQLEVSDEEDALESEEEFEGEN) has biased composition (acidic residues). The stretch at 32–106 (SSNEDEQLEV…KERTIDEYNN (75 aa)) forms a coiled coil. The residue at position 50 (Ser-50) is a Phosphoserine. WD repeat units follow at residues 234–273 (GHYD…PVKV), 278–317 (DRRG…QLEI), 320–359 (GHHD…RLTF), 397–435 (FCEG…PIFT), 471–509 (QPFW…RSFE), and 516–562 (GAKG…ARNG).

It belongs to the WD repeat RRP9 family. In terms of assembly, interacts with UTP25. Component of the ribosomal small subunit (SSU) processome composed of at least 40 protein subunits and snoRNA U3.

The protein localises to the nucleus. Its subcellular location is the nucleolus. In terms of biological role, involved in nucleolar processing of pre-18S ribosomal RNA. Required for efficient pre-rRNA cleavage at sites A0, A1 and A2, and biosynthesis of 18S rRNA. The protein is Ribosomal RNA-processing protein 9 (RRP9) of Saccharomyces cerevisiae (strain ATCC 204508 / S288c) (Baker's yeast).